The sequence spans 289 residues: Glucosamine-6-phosphate deaminase 1 (289 aa).

Asp-72 acts as the Proton acceptor; for enolization step in catalysis. Asp-141 serves as the catalytic For ring-opening step. His-143 serves as the catalytic Proton acceptor; for ring-opening step. Glu-148 serves as the catalytic For ring-opening step. Thr-161 is modified (phosphothreonine).

This sequence belongs to the glucosamine/galactosamine-6-phosphate isomerase family. As to quaternary structure, homohexamer. In terms of tissue distribution, widely expressed. Detected in brain, liver, kidney, muscle, ovary, testis, spermatids and spermatozoa. In spermatids, located close to the developing acrosome vesicle. In spermatozoa, found close to the acrosomal region.

Its subcellular location is the cytoplasm. It carries out the reaction alpha-D-glucosamine 6-phosphate + H2O = beta-D-fructose 6-phosphate + NH4(+). The protein operates within nucleotide-sugar biosynthesis; UDP-N-acetyl-alpha-D-glucosamine biosynthesis; alpha-D-glucosamine 6-phosphate from D-fructose 6-phosphate: step 1/1. Its activity is regulated as follows. Allosterically activated by N-acetylglucosamine-6-phosphate (GlcNAc6P). Catalyzes the reversible conversion of alpha-D-glucosamine 6-phosphate (GlcN-6P) into beta-D-fructose 6-phosphate (Fru-6P) and ammonium ion, a regulatory reaction step in de novo uridine diphosphate-N-acetyl-alpha-D-glucosamine (UDP-GlcNAc) biosynthesis via hexosamine pathway. Deamination is coupled to aldo-keto isomerization mediating the metabolic flux from UDP-GlcNAc toward Fru-6P. At high ammonium level can drive amination and isomerization of Fru-6P toward hexosamines and UDP-GlcNAc synthesis. Has a role in fine tuning the metabolic fluctuations of cytosolic UDP-GlcNAc and their effects on hyaluronan synthesis that occur during tissue remodeling. Seems to trigger calcium oscillations in mammalian eggs. These oscillations serve as the essential trigger for egg activation and early development of the embryo. This chain is Glucosamine-6-phosphate deaminase 1, found in Mus musculus (Mouse).